Here is an 839-residue protein sequence, read N- to C-terminus: Probable beta-glucosidase I (839 aa).

Asn197 is a glycosylation site (N-linked (GlcNAc...) asparagine). Asp225 is an active-site residue. The PA14 domain occupies 396–556 (DGKTGFKFRV…TQEELISKAV (161 aa)). Asn494 carries N-linked (GlcNAc...) asparagine glycosylation.

The protein belongs to the glycosyl hydrolase 3 family.

It is found in the secreted. The enzyme catalyses Hydrolysis of terminal, non-reducing beta-D-glucosyl residues with release of beta-D-glucose.. It functions in the pathway glycan metabolism; cellulose degradation. Beta-glucosidases are one of a number of cellulolytic enzymes, and catalyze the last step releasing glucose from the inhibitory cellobiose. The protein is Probable beta-glucosidase I (bglI) of Emericella nidulans (strain FGSC A4 / ATCC 38163 / CBS 112.46 / NRRL 194 / M139) (Aspergillus nidulans).